A 378-amino-acid chain; its full sequence is GTPase Obg (378 aa).

The Obg domain occupies 1-159 (MKFVDEATIE…RRLRLELKVL (159 aa)). Positions 160–336 (ADVGLLGLPN…LIWALQDYLD (177 aa)) constitute an OBG-type G domain. GTP-binding positions include 166-173 (GLPNAGKS), 191-195 (FTTLH), 213-216 (DIPG), 288-291 (NKLD), and 317-319 (SGL). Mg(2+)-binding residues include S173 and T193. Positions 345-378 (AQDQADGTYVAEDPRFDATRSDAAPPGAPRGGDE) are disordered.

The protein belongs to the TRAFAC class OBG-HflX-like GTPase superfamily. OBG GTPase family. Monomer. Mg(2+) is required as a cofactor.

The protein localises to the cytoplasm. In terms of biological role, an essential GTPase which binds GTP, GDP and possibly (p)ppGpp with moderate affinity, with high nucleotide exchange rates and a fairly low GTP hydrolysis rate. Plays a role in control of the cell cycle, stress response, ribosome biogenesis and in those bacteria that undergo differentiation, in morphogenesis control. This Bordetella petrii (strain ATCC BAA-461 / DSM 12804 / CCUG 43448) protein is GTPase Obg.